Here is a 738-residue protein sequence, read N- to C-terminus: Photosystem I P700 chlorophyll a apoprotein A2 (738 aa).

A run of 8 helical transmembrane segments spans residues 46-69, 135-158, 175-199, 273-291, 333-356, 372-398, 420-442, and 521-539; these read LFST…FHIA, LYQG…LHLQ, LNHH…HVAI, IAHH…GHMY, LHFQ…QHMY, AALY…IFFI, AIIS…LYVH, and FLVH…LILV. [4Fe-4S] cluster contacts are provided by Cys-563 and Cys-572. A run of 2 helical transmembrane segments spans residues 579-600 and 647-669; these read AFYL…YWHW and LAVW…MFLI. Chlorophyll a-binding residues include His-658, Met-666, and Tyr-674. Residue Trp-675 participates in phylloquinone binding. The helical transmembrane segment at 711–731 threads the bilayer; the sequence is VVGLAHFTVGYVLTYGAFLIA.

This sequence belongs to the PsaA/PsaB family. The PsaA/B heterodimer binds the P700 chlorophyll special pair and subsequent electron acceptors. PSI consists of a core antenna complex that captures photons, and an electron transfer chain that converts photonic excitation into a charge separation. The cyanobacterial PSI reaction center is composed of one copy each of PsaA,B,C,D,E,F,I,J,K,L,M and X, and forms trimeric complexes. Requires PSI electron transfer chain: 5 chlorophyll a, 1 chlorophyll a', 2 phylloquinones and 3 4Fe-4S clusters. PSI core antenna: 90 chlorophyll a, 22 carotenoids, 3 phospholipids and 1 galactolipid. P700 is a chlorophyll a/chlorophyll a' dimer, A0 is one or more chlorophyll a, A1 is one or both phylloquinones and FX is a shared 4Fe-4S iron-sulfur center. as cofactor.

The protein resides in the cellular thylakoid membrane. It carries out the reaction reduced [plastocyanin] + hnu + oxidized [2Fe-2S]-[ferredoxin] = oxidized [plastocyanin] + reduced [2Fe-2S]-[ferredoxin]. Functionally, psaA and PsaB bind P700, the primary electron donor of photosystem I (PSI), as well as the electron acceptors A0, A1 and FX. PSI is a plastocyanin/cytochrome c6-ferredoxin oxidoreductase, converting photonic excitation into a charge separation, which transfers an electron from the donor P700 chlorophyll pair to the spectroscopically characterized acceptors A0, A1, FX, FA and FB in turn. Oxidized P700 is reduced on the lumenal side of the thylakoid membrane by plastocyanin or cytochrome c6. This chain is Photosystem I P700 chlorophyll a apoprotein A2, found in Synechococcus sp. (strain CC9311).